Reading from the N-terminus, the 136-residue chain is MGDKTKVQVSKLKPGRYIIIDGEPCRIVNVTVSSPGKHGSAKARIEAVGIFDGKVRSIVKPTSAEVDVPIIDKRVGQIIAITPDTVQLMDMETYETFDVPIEGGVDDEVKGQLTEGITVEYWETLGRIQIKKIRGE.

Lys-37 is subject to Hypusine.

Belongs to the eIF-5A family.

The protein resides in the cytoplasm. In terms of biological role, functions by promoting the formation of the first peptide bond. The sequence is that of Translation initiation factor 5A from Thermococcus kodakarensis (strain ATCC BAA-918 / JCM 12380 / KOD1) (Pyrococcus kodakaraensis (strain KOD1)).